The following is a 442-amino-acid chain: DNA topoisomerase medium subunit (442 aa).

A Topo IIA-type catalytic domain is found at 29–438 (IPNMIDGFKP…DVVTEYTKDL (410 aa)). Tyr117 (O-(5'-phospho-DNA)-tyrosine intermediate) is an active-site residue.

Belongs to the type II topoisomerase family. As to quaternary structure, part of the DNA topoisomerase complex made of gp39, gp52 and gp60. It depends on Mg(2+) as a cofactor.

The enzyme catalyses ATP-dependent breakage, passage and rejoining of double-stranded DNA.. Medium subunit of the DNA topoisomerase that untwists superhelical DNA. Controls topological states of double-stranded DNA by transient breakage and subsequent rejoining of DNA strands. This Enterobacteria phage T4 (Bacteriophage T4) protein is DNA topoisomerase medium subunit (52).